The following is a 282-amino-acid chain: Phycocyanobilin lyase subunit beta (282 aa).

The protein belongs to the CpcE/RpcE/PecE family. In terms of assembly, cpcE and CpcF associate to form a lyase.

In terms of biological role, required for the chromophorylation of the CpcA gene product. This Pseudanabaena tenuis (strain PCC 7409) protein is Phycocyanobilin lyase subunit beta (cpcF1).